Here is a 315-residue protein sequence, read N- to C-terminus: Homoserine kinase (315 aa).

Residue Pro-97–Thr-107 participates in ATP binding.

This sequence belongs to the GHMP kinase family. Homoserine kinase subfamily.

It localises to the cytoplasm. It carries out the reaction L-homoserine + ATP = O-phospho-L-homoserine + ADP + H(+). The protein operates within amino-acid biosynthesis; L-threonine biosynthesis; L-threonine from L-aspartate: step 4/5. In terms of biological role, catalyzes the ATP-dependent phosphorylation of L-homoserine to L-homoserine phosphate. In Prochlorococcus marinus (strain MIT 9301), this protein is Homoserine kinase.